The primary structure comprises 209 residues: RNA chaperone ProQ (209 aa).

A disordered region spans residues 105–148 (ESQDKAKAKRAALAPKPAAKKAPKKVAVPQRAKTERPAKPAPKA).

The protein belongs to the ProQ family.

It is found in the cytoplasm. Functionally, RNA chaperone with significant RNA binding, RNA strand exchange and RNA duplexing activities. The polypeptide is RNA chaperone ProQ (Shewanella baltica (strain OS223)).